Reading from the N-terminus, the 1367-residue chain is MTLEQELRQLSKAKARAQRNGQLCEEAVCCHQLGELLASHGRFQEALEEHQQELHLLESVQDTLGCAVAHRKIGERLAEMENYSAALKHQHLYLDLAGSLSNHTELQRAWATIGRTHLDVYDHCQSRDSLLQAQAAFEKSLAIVDEKLEGMLTQRELSEMRTRLYLNLGLTCESLQQTAQCNNYFKKSIFLAEQNHLYEDLFRARYNLGAIHWRGGQHSQAMRCLEGARECARAMKMRFMESECCMLVSQVLQDLGDFLAAKRALKKAYRLGSQKPNQRVAICQSLKYVLAVVRLQQQLQEAEGNDLQGAMAICEQLGDLFSKADDFPKASEAYQKQLHFAELLNRPDLELAVIHESLATTLGDMKDYHKAVHHYEEELRLRKGNALEEAKTWFNIGLAREEAGDAYELLAPCFQKAFGCAQQAQRYQLQRQILQHLYTVQLKLQPQEARDTEIRLQELSMAKDTEEEEEEEEEEEEEASEALETSEMELSESEDDADGLSQQLEEEEELQGCVGRRKINKWNRRNDMGETLLHRACIEGQLRRVQDLVKQGHPLNPRDYCGWTPLHEACNYGHLEIVRFLLDHGAAVDDPGGQGCDGITPLHDALNCGHFEVAELLIERGASVTLRTRKGLSPLETLQQWVKLYFRDLDLETRQKAASMERRLQMASSGQASHSSPALQTIPNNHLFDPETSPPSSPCPKPPSYTPRPPEASPAPAKVFLEETVSAVCRPRKNRHRPASSSSSSEDDDDNTNPCRPSQKRLRHSTQQGEAKTPDPSKSRETAISSACRAAYQAAIRGVGSAQSRRLVPSLPRGSNEVPAPKTALIPEEEFLAEEWLEVDTPLTRSSSSSRPSTSISDYERCPARPRTRAKQSRPASLDGWCTRTKAADASLTAEPTENSSMPRTTGPNKENCAAGQPLLLVQPPPIRVRVQIQDNLFLIPVPHSDVHSVAWLAEQAAQRYFQTCGLLPRLTLRKDGALLAPQDPIPDVLQSNDEVMAEVTSWDLPPLKDRYRRACQSLGQGEHQQVLQAMEHQSSSPSFSACSLALCQAQLTPLLRALKLHTALRELRLSGNRLGDPCATELLATLGTMPNLVLLDLSSNHLGPEGLRQLVEGSLGQTAFQNVEELDLSMNPLGDGCAQALASLLRTCPVLRTLRLQACGFSPSFFLSHQAALGSAFKDAEHLKTLSLSYNTLGAPALARVLQSLPTCTLLHLELSSVAASKSNSSLIEPVIKYLTKEGCALAHLTLSANCLSDKAVRELSRCLPSCPSLTSLDLSANPEVSCAGLEELLSALQERPQGLSFFDLSGCSIQGPLNSDLWDKILSQLQELQLCSKDLTTKDRDTLCQRLPAGACTLNQGSKLFFKCL.

TPR repeat units lie at residues 27-60 (AVCC…LESV), 67-100 (AVAH…AGSL), 107-147 (QRAW…VDEK), 162-195 (TRLY…AEQN), 202-235 (FRAR…ARAM), 242-275 (SECC…GSQK), 311-344 (MAIC…AELL), 352-385 (AVIH…RKGN), and 390-424 (AKTW…AQQA). Positions 460–509 (SMAKDTEEEEEEEEEEEEEASEALETSEMELSESEDDADGLSQQLEEEEE) are disordered. The segment covering 465-509 (TEEEEEEEEEEEEEASEALETSEMELSESEDDADGLSQQLEEEEE) has biased composition (acidic residues). ANK repeat units follow at residues 528 to 557 (MGET…PLNP), 561 to 590 (CGWT…AVDD), and 597 to 626 (DGIT…SVTL). Disordered regions lie at residues 660-714 (MERR…EASP) and 726-785 (SAVC…TAIS). Positions 666–684 (MASSGQASHSSPALQTIPN) are enriched in polar residues. Over residues 692-713 (TSPPSSPCPKPPSYTPRPPEAS) the composition is skewed to pro residues. A compositionally biased stretch (basic and acidic residues) spans 772-781 (KTPDPSKSRE). Arg-797 is modified (omega-N-methylarginine). Disordered regions lie at residues 798-820 (GVGS…EVPA) and 841-910 (TPLT…GPNK). Over residues 844–857 (TRSSSSSRPSTSIS) the composition is skewed to low complexity. Polar residues predominate over residues 894-909 (AEPTENSSMPRTTGPN). 7 LRR repeats span residues 1062 to 1086 (HTAL…LLAT), 1090 to 1118 (MPNL…SLGQ), 1121 to 1144 (FQNV…ALAS), 1181 to 1205 (AEHL…VLQS), 1240 to 1263 (GCAL…ELSR), 1268 to 1293 (CPSL…LLSA), and 1324 to 1347 (LSQL…TLCQ).

The protein belongs to the Tonsoku family. In terms of assembly, component of the MMS22L-TONSL complex, a complex at least composed of MMS22L and TONSL/NFKBIL2. Interacts with the MCM complex, the FACT complex and the RPA complex. Interacts with MCM5; the interaction is direct. Binds histones, with a strong preference for histone H3.1 (histones H3.1 and H3-4/H3.1t). Interacts (via ANK repeats) with histone H4; specifically binds histone H4 lacking methylation at 'Lys-20' (H4K20me0). May interact with DNAJC9; the interaction seems to be histone-dependent.

Its subcellular location is the nucleus. It localises to the chromosome. The protein resides in the cytoplasm. Component of the MMS22L-TONSL complex, a complex that promotes homologous recombination-mediated repair of double-strand breaks (DSBs) at stalled or collapsed replication forks. The MMS22L-TONSL complex is required to maintain genome integrity during DNA replication. It mediates the assembly of RAD51 filaments on single-stranded DNA (ssDNA): the MMS22L-TONSL complex is recruited to DSBs following histone replacement by histone chaperones and eviction of the replication protein A complex (RPA/RP-A) from DSBs. Following recruitment to DSBs, the TONSL-MMS22L complex promotes recruitment of RAD51 filaments and subsequent homologous recombination. Within the complex, TONSL acts as a histone reader, which recognizes and binds newly synthesized histones following their replacement by histone chaperones. Specifically binds histone H4 lacking methylation at 'Lys-20' (H4K20me0) and histone H3.1. This is Tonsoku-like protein from Rattus norvegicus (Rat).